Consider the following 330-residue polypeptide: Glycerol-3-phosphate dehydrogenase [NAD(P)+] (330 aa).

4 residues coordinate NADPH: serine 11, phenylalanine 12, arginine 32, and lysine 106. Residues lysine 106, glycine 133, and serine 135 each coordinate sn-glycerol 3-phosphate. Alanine 137 serves as a coordination point for NADPH. Positions 188, 241, 251, 252, and 253 each coordinate sn-glycerol 3-phosphate. The Proton acceptor role is filled by lysine 188. Arginine 252 contacts NADPH. NADPH contacts are provided by valine 276 and glutamate 278.

This sequence belongs to the NAD-dependent glycerol-3-phosphate dehydrogenase family.

The protein resides in the cytoplasm. The catalysed reaction is sn-glycerol 3-phosphate + NAD(+) = dihydroxyacetone phosphate + NADH + H(+). The enzyme catalyses sn-glycerol 3-phosphate + NADP(+) = dihydroxyacetone phosphate + NADPH + H(+). It functions in the pathway membrane lipid metabolism; glycerophospholipid metabolism. Catalyzes the reduction of the glycolytic intermediate dihydroxyacetone phosphate (DHAP) to sn-glycerol 3-phosphate (G3P), the key precursor for phospholipid synthesis. The sequence is that of Glycerol-3-phosphate dehydrogenase [NAD(P)+] from Clostridium botulinum (strain Eklund 17B / Type B).